Here is a 320-residue protein sequence, read N- to C-terminus: Pyrroline-5-carboxylate reductase 2 (320 aa).

Position 2 is an N-acetylserine (Ser2). Residues 6-11 (IGAGQL) and Ser34 contribute to the NADP(+) site. Positions 8, 10, 11, 34, 36, 56, 70, 71, and 97 each coordinate NADPH. NADP(+) contacts are provided by residues Asn56, 69–72 (AVKP), and 95–97 (CAA). Residue Glu164 coordinates L-proline. Asn230 provides a ligand contact to NADPH. Residues Ala237 and Thr238 each contribute to the L-proline site. Residues 298-320 (TTLTPTSSGKLLTRSPVPGGKKD) form a disordered region. Ser304 is subject to Phosphoserine.

Belongs to the pyrroline-5-carboxylate reductase family. As to quaternary structure, homodecamer; composed of 5 homodimers. Interacts with LTO1.

It localises to the cytoplasm. It is found in the mitochondrion. It carries out the reaction L-proline + NADP(+) = (S)-1-pyrroline-5-carboxylate + NADPH + 2 H(+). It catalyses the reaction L-proline + NAD(+) = (S)-1-pyrroline-5-carboxylate + NADH + 2 H(+). It participates in amino-acid biosynthesis; L-proline biosynthesis; L-proline from L-glutamate 5-semialdehyde: step 1/1. Oxidoreductase that catalyzes the last step in proline biosynthesis, which corresponds to the reduction of pyrroline-5-carboxylate to L-proline using NAD(P)H. At physiologic concentrations, has higher specific activity in the presence of NADH. Involved in cellular response to oxidative stress. In some cell types, such as erythrocytes, its primary function may be the generation of NADP(+). The sequence is that of Pyrroline-5-carboxylate reductase 2 (PYCR2) from Bos taurus (Bovine).